Reading from the N-terminus, the 359-residue chain is MSTLNKYKTLIIISSLAAVSSCSWFSAKDGTEDIDDRYMKSQQDLELQVPPNVKQIEVQDRYRVPEGVIITNRNAKGKALSLDPPQLLLVGGDGVREDSEQSHPTVWVRHQDTPFMNYVSRFMMQKNIPVISSTEKQISSDWISDEDEDIFSQYIGSYNLDGQRHKVTLEIIGQNANEVAVQARNTQSQRLVDDKWVTMNTSKTVASQFLNAFLGFYDTERTKEARERILEEGTINVSLGTNSQGQIALIAERDLIAIWEHLPSVLEDLNLSVSDRDQSAGIYYFNVKEPETGFWAWLWGNDETNAKVDMEPGDYQIHLAATTYGVSMTFKDEEGNLLDSNLVTKIYPEFAASFKSRGK.

Residues 1–21 form the signal peptide; the sequence is MSTLNKYKTLIIISSLAAVSS. Cysteine 22 carries N-palmitoyl cysteine lipidation. The S-diacylglycerol cysteine moiety is linked to residue cysteine 22.

This sequence belongs to the BamC family. In terms of assembly, part of the Bam complex.

Its subcellular location is the cell outer membrane. In terms of biological role, part of the outer membrane protein assembly complex, which is involved in assembly and insertion of beta-barrel proteins into the outer membrane. This is Outer membrane protein assembly factor BamC from Kangiella koreensis (strain DSM 16069 / JCM 12317 / KCTC 12182 / SW-125).